A 926-amino-acid chain; its full sequence is Isoleucine--tRNA ligase (926 aa).

A 'HIGH' region motif is present at residues 57–67 (PYANGNIHMGH). Glu-555 provides a ligand contact to L-isoleucyl-5'-AMP. The short motif at 596–600 (KMSKS) is the 'KMSKS' region element. Residue Lys-599 coordinates ATP. Zn(2+) contacts are provided by Cys-897, Cys-900, Cys-914, and Cys-917.

Belongs to the class-I aminoacyl-tRNA synthetase family. IleS type 1 subfamily. Monomer. Zn(2+) is required as a cofactor.

The protein resides in the cytoplasm. It catalyses the reaction tRNA(Ile) + L-isoleucine + ATP = L-isoleucyl-tRNA(Ile) + AMP + diphosphate. In terms of biological role, catalyzes the attachment of isoleucine to tRNA(Ile). As IleRS can inadvertently accommodate and process structurally similar amino acids such as valine, to avoid such errors it has two additional distinct tRNA(Ile)-dependent editing activities. One activity is designated as 'pretransfer' editing and involves the hydrolysis of activated Val-AMP. The other activity is designated 'posttransfer' editing and involves deacylation of mischarged Val-tRNA(Ile). This chain is Isoleucine--tRNA ligase, found in Natranaerobius thermophilus (strain ATCC BAA-1301 / DSM 18059 / JW/NM-WN-LF).